Here is a 446-residue protein sequence, read N- to C-terminus: NAD(P)H sulfur oxidoreductase (CoA-dependent) (446 aa).

Residue 17 to 18 (AA) coordinates FAD. Arginine 28 is a CoA binding site. Residues 39 to 40 (EA) and 46 to 48 (HAP) contribute to the FAD site. CoA contacts are provided by residues 45–49 (SHAPC), 66–67 (HY), and arginine 76. The Redox-active role is filled by cysteine 49. Valine 86, aspartate 284, and alanine 302 together coordinate FAD. Positions 306 and 362 each coordinate CoA. Tyrosine 426 contributes to the FAD binding site. Residues tryptophan 434 and arginine 442 each coordinate CoA.

It belongs to the class-III pyridine nucleotide-disulfide oxidoreductase family. It depends on FAD as a cofactor.

The catalysed reaction is hydrogen sulfide + NADP(+) = sulfur + NADPH. It catalyses the reaction hydrogen sulfide + NAD(+) = sulfur + NADH. Functionally, catalyzes the CoA-dependent reduction of elemental sulfur (S(0)) to produce hydrogen sulfide. The polypeptide is NAD(P)H sulfur oxidoreductase (CoA-dependent) (Pyrococcus abyssi (strain GE5 / Orsay)).